The sequence spans 441 residues: EP1-like glycoprotein 3 (441 aa).

A signal peptide spans 1–22; sequence MKFSITLALCFTLSIFLIGSQA. Residues 29-159 enclose the Bulb-type lectin domain; sequence QFRVVNEGGY…SGKFVWQSFD (131 aa). N-linked (GlcNAc...) asparagine glycans are attached at residues asparagine 102, asparagine 258, and asparagine 269. A WD repeat occupies 254–296; it reads GSKFNVSTFLSRPKHNATLSFIRLESDGNIRVWSYSTLATSTA. The PAN domain occupies 356-433; the sequence is CDPKTFHYFK…SSLVAYVKAP (78 aa). 2 disulfide bridges follow: cysteine 387-cysteine 409 and cysteine 391-cysteine 397.

Phosphorylated on tyrosine.

It is found in the secreted. It localises to the cell wall. May be involved in a cell-to cell programmed cell death (PCD) signaling mechanism. This Arabidopsis thaliana (Mouse-ear cress) protein is EP1-like glycoprotein 3.